Consider the following 1028-residue polypeptide: Contactin-6 (1028 aa).

The signal sequence occupies residues 1–19 (MRLLWKLVILLPLINSCAG). Ig-like C2-type domains are found at residues 32 to 117 (PQDV…AKLQ), 122 to 208 (EDFE…RSVQ), 227 to 308 (PKIE…RNLA), 318 to 402 (PEWE…AELR), 408 to 495 (PDFS…GSLI), and 499 to 587 (RTVI…ERLS). 6 cysteine pairs are disulfide-bonded: cysteine 50–cysteine 100, cysteine 144–cysteine 196, cysteine 249–cysteine 297, cysteine 339–cysteine 386, cysteine 431–cysteine 479, and cysteine 521–cysteine 577. Asparagine 65 and asparagine 193 each carry an N-linked (GlcNAc...) asparagine glycan. N-linked (GlcNAc...) asparagine glycosylation is found at asparagine 368, asparagine 377, and asparagine 468. Fibronectin type-III domains follow at residues 600–698 (PPED…TKAS), 703–800 (APVN…SGED), 805–901 (APRG…TKKS), and 902–996 (PPSQ…KMSS). 4 N-linked (GlcNAc...) asparagine glycosylation sites follow: asparagine 659, asparagine 765, asparagine 860, and asparagine 865. Tyrosine 882 bears the Phosphotyrosine mark. Residues 887-902 (TGPSSPPVNVTTKKSP) are compositionally biased toward polar residues. Residues 887–908 (TGPSSPPVNVTTKKSPPSQPPA) are disordered. Residues asparagine 895, asparagine 931, asparagine 956, and asparagine 957 are each glycosylated (N-linked (GlcNAc...) asparagine). A lipid anchor (GPI-anchor amidated serine) is attached at serine 999. The propeptide at 1000–1028 (VGVQILKPSTQFLTMVGFFYCFVIQPLSR) is removed in mature form.

This sequence belongs to the immunoglobulin superfamily. Contactin family. As to quaternary structure, interacts with PTPRG. As to expression, specifically expressed in neuronal cells. In brain, it is expressed in spinal cord, cerebrum and cerebellum. At 17 dpc, it is expressed in hippocampus, cerebellum, and the brain stem. Strongly expressed after birth with a maximum level between P1 and P21, which corresponds to the time frame of oligodendrogliogenesis.

It is found in the cell membrane. In terms of biological role, contactins mediate cell surface interactions during nervous system development. Participates in oligodendrocytes generation by acting as a ligand of NOTCH1. Its association with NOTCH1 promotes NOTCH1 activation through the released notch intracellular domain (NICD) and subsequent translocation to the nucleus. May be involved in motor coordination. This is Contactin-6 (Cntn6) from Rattus norvegicus (Rat).